Here is a 157-residue protein sequence, read N- to C-terminus: Small ribosomal subunit protein uS7 (157 aa).

The protein belongs to the universal ribosomal protein uS7 family. Part of the 30S ribosomal subunit. Contacts proteins S9 and S11.

One of the primary rRNA binding proteins, it binds directly to 16S rRNA where it nucleates assembly of the head domain of the 30S subunit. Is located at the subunit interface close to the decoding center, probably blocks exit of the E-site tRNA. The sequence is that of Small ribosomal subunit protein uS7 from Caulobacter vibrioides (strain ATCC 19089 / CIP 103742 / CB 15) (Caulobacter crescentus).